We begin with the raw amino-acid sequence, 312 residues long: Olfactory receptor 5J2 (312 aa).

Topologically, residues 1–25 (MADDNFTVVTEFILLGLTDHAELKA) are extracellular. An N-linked (GlcNAc...) asparagine glycan is attached at Asn5. A helical transmembrane segment spans residues 26–46 (VLFVVFLVIYAITLLRNLGMI). At 47 to 54 (LLIQITSK) the chain is on the cytoplasmic side. Residues 55 to 75 (LHTPMYFLLSCLSFVDACYSS) traverse the membrane as a helical segment. Residues 76-99 (AIAPKMLVNLLVVKATISFSACMV) are Extracellular-facing. The cysteines at positions 97 and 189 are disulfide-linked. Residues 100-120 (QHLCFGVFITTEGFLLSVMAY) traverse the membrane as a helical segment. Topologically, residues 121-139 (DRYVAIVSPLLYTVAMSDR) are cytoplasmic. The chain crosses the membrane as a helical span at residues 140-160 (KCVELVTGSWIGGIVNTLIHT). At 161-196 (ISLRRLSFCRLNAVSHFFCDIPSLLKLSCSDTSMNE) the chain is on the extracellular side. A helical transmembrane segment spans residues 197-217 (LLLLTFSGVIAMATFLTVIIS). The Cytoplasmic portion of the chain corresponds to 218–237 (YIFIAFASLRIHSASGRQQA). Residues 238–258 (FSTCASHLTAVTIFYGTLIFS) form a helical membrane-spanning segment. The Extracellular segment spans residues 259 to 271 (YIQPSSQYFVEQE). The chain crosses the membrane as a helical span at residues 272–292 (KVVSMFYTLGIPMLNLLIHSL). Residues 293 to 312 (RNKDVKEAVKRAIEMKHFLC) are Cytoplasmic-facing.

This sequence belongs to the G-protein coupled receptor 1 family.

It localises to the cell membrane. Its function is as follows. Odorant receptor. The sequence is that of Olfactory receptor 5J2 (OR5J2) from Homo sapiens (Human).